A 371-amino-acid polypeptide reads, in one-letter code: Queuine tRNA-ribosyltransferase (371 aa).

The active-site Nucleophile is aspartate 90. The Proton acceptor role is filled by aspartate 90. Substrate is bound by residues 90–94, serine 91, aspartate 144, glutamine 189, and glycine 215; that span reads DSGGF. Residues 246–252 are RNA binding; sequence GVGTPEN. Catalysis depends on aspartate 265, which acts as the Nucleophile. Residues 270 to 274 form an RNA binding; important for wobble base 34 recognition region; the sequence is TRNAR. Zn(2+) contacts are provided by cysteine 303, cysteine 305, cysteine 308, and histidine 334.

The protein belongs to the queuine tRNA-ribosyltransferase family. As to quaternary structure, homodimer. Within each dimer, one monomer is responsible for RNA recognition and catalysis, while the other monomer binds to the replacement base PreQ1. Requires Zn(2+) as cofactor.

It catalyses the reaction 7-aminomethyl-7-carbaguanine + guanosine(34) in tRNA = 7-aminomethyl-7-carbaguanosine(34) in tRNA + guanine. Its pathway is tRNA modification; tRNA-queuosine biosynthesis. Catalyzes the base-exchange of a guanine (G) residue with the queuine precursor 7-aminomethyl-7-deazaguanine (PreQ1) at position 34 (anticodon wobble position) in tRNAs with GU(N) anticodons (tRNA-Asp, -Asn, -His and -Tyr). Catalysis occurs through a double-displacement mechanism. The nucleophile active site attacks the C1' of nucleotide 34 to detach the guanine base from the RNA, forming a covalent enzyme-RNA intermediate. The proton acceptor active site deprotonates the incoming PreQ1, allowing a nucleophilic attack on the C1' of the ribose to form the product. After dissociation, two additional enzymatic reactions on the tRNA convert PreQ1 to queuine (Q), resulting in the hypermodified nucleoside queuosine (7-(((4,5-cis-dihydroxy-2-cyclopenten-1-yl)amino)methyl)-7-deazaguanosine). This chain is Queuine tRNA-ribosyltransferase, found in Helicobacter pylori (strain ATCC 700392 / 26695) (Campylobacter pylori).